The chain runs to 426 residues: Endoglucanase (426 aa).

Positions 1–19 are cleaved as a signal peptide; that stretch reads MRRCMPLVAASVAALMLAG. Cys20 carries N-palmitoyl cysteine lipidation. A lipid anchor (S-diacylglycerol cysteine) is attached at Cys20. The propeptide occupies 20–45; that stretch reads CGGGDGDPSLSTASVSATDTTTLKPA. Glu249 functions as the Proton donor in the catalytic mechanism. Residue Glu361 is the Nucleophile of the active site.

This sequence belongs to the glycosyl hydrolase 5 (cellulase A) family.

It localises to the cell membrane. The enzyme catalyses Endohydrolysis of (1-&gt;4)-beta-D-glucosidic linkages in cellulose, lichenin and cereal beta-D-glucans.. The sequence is that of Endoglucanase (egl) from Ralstonia solanacearum (Pseudomonas solanacearum).